Reading from the N-terminus, the 86-residue chain is Small ribosomal subunit protein bS16 (86 aa).

This sequence belongs to the bacterial ribosomal protein bS16 family.

This chain is Small ribosomal subunit protein bS16, found in Stenotrophomonas maltophilia (strain K279a).